The following is a 128-amino-acid chain: Small ribosomal subunit protein uS11 (128 aa).

The protein belongs to the universal ribosomal protein uS11 family. As to quaternary structure, part of the 30S ribosomal subunit. Interacts with proteins S7 and S18. Binds to IF-3.

Located on the platform of the 30S subunit, it bridges several disparate RNA helices of the 16S rRNA. Forms part of the Shine-Dalgarno cleft in the 70S ribosome. The polypeptide is Small ribosomal subunit protein uS11 (Vesicomyosocius okutanii subsp. Calyptogena okutanii (strain HA)).